The chain runs to 1765 residues: Sodium channel protein type 11 subunit alpha (1765 aa).

The Cytoplasmic segment spans residues 1-126 (MEERYYPVIF…PIRSFMIRIS (126 aa)). One copy of the I repeat lies at 115–406 (FNPIRSFMIR…VTMAYEEQNR (292 aa)). Residues 127–148 (VHSVFSMFIICTVIINCMFMAN) traverse the membrane as a helical segment. N149 carries an N-linked (GlcNAc...) asparagine glycan. The Extracellular segment spans residues 149–159 (NSSVDSRPSSN). A helical membrane pass occupies residues 160-179 (IPEYVFIGIYVLEAVIKILA). Residues 180–191 (RGFIVDEFSYLR) lie on the Cytoplasmic side of the membrane. A helical membrane pass occupies residues 192 to 211 (DPWNWLDFIVIGTAIAPCFL). Over 212–219 (GNKVNNLS) the chain is Extracellular. N-linked (GlcNAc...) asparagine glycosylation is present at N217. Residues 220 to 239 (TLRTFRVLRALKAISVISGL) form a helical; Voltage-sensor membrane-spanning segment. The Cytoplasmic segment spans residues 240 to 255 (KVIVGALLRSVKKLVD). The chain crosses the membrane as a helical span at residues 256-269 (VMVLTLFCLSIFAL). At 270–342 (VGQQLFMGIL…PDYNYTNFDS (73 aa)) the chain is on the extracellular side. A disulfide bond links C283 and C320. N-linked (GlcNAc...) asparagine glycans are attached at residues N303, N327, and N336. Positions 343 to 367 (FGWSFLAMFRVMTQDSWEKLYRQIL) form an intramembrane region, pore-forming. Topologically, residues 368-374 (RTSGIYF) are extracellular. A helical transmembrane segment spans residues 375-400 (VFFFVVVIFLGSFYLLNLTLAVVTMA). The Cytoplasmic segment spans residues 401-570 (YEEQNRNVAA…WLCIKKVLQT (170 aa)). Residues 470 to 490 (RGSKTARASASDSEDDASKNP) form a disordered region. The stretch at 557–821 (CSPPWLCIKK…EGETRKTKVQ (265 aa)) is one II repeat. A helical transmembrane segment spans residues 571 to 594 (IMTDPFTELAITICIIVNTVFLAM). Residues 595–605 (EHHNMDNSLKD) lie on the Extracellular side of the membrane. A helical membrane pass occupies residues 606–629 (ILKIGNWVFTGIFIAEMCLKIIAL). Residues 630–637 (DPYHYFRH) are Cytoplasmic-facing. The chain crosses the membrane as a helical span at residues 638 to 659 (GWNIFDSIVALVSLADVLFHKL). Residues 660 to 664 (SKNLS) lie on the Extracellular side of the membrane. N662 carries an N-linked (GlcNAc...) asparagine glycan. A helical; Voltage-sensor membrane pass occupies residues 665 to 684 (FLASLRVLRVFKLAKSWPTL). At 685 to 699 (NTLIKIIGHSVGALG) the chain is on the cytoplasmic side. Residues 700–722 (NLTVVLTIVVFIFSVVGMRLFGA) traverse the membrane as a helical segment. Topologically, residues 723-742 (KFNKTCSTSPESLRRWHMGD) are extracellular. The N-linked (GlcNAc...) asparagine glycan is linked to N725. Positions 743–763 (FYHSFLVVFRILCGEWIENMW) form an intramembrane region, pore-forming. Topologically, residues 764–773 (ECMQEMEGSP) are extracellular. C765 and C775 are joined by a disulfide. A helical membrane pass occupies residues 774–799 (LCVIVFVLIMVVGKLVVLNLFIALLL). Residues 800 to 1030 (NSFSNEEKDG…WWNLRKTCYQ (231 aa)) are Cytoplasmic-facing. Residues 850–869 (NSPKPNEATESFAGESRDTA) form a disordered region. An III repeat occupies 1023 to 1320 (NLRKTCYQIV…KKYYNAMKKL (298 aa)). A helical transmembrane segment spans residues 1031 to 1053 (IVKHSWFESFIIFVILLSSGALI). The Extracellular portion of the chain corresponds to 1054 to 1067 (FEDVNLPSRPQVEK). A helical membrane pass occupies residues 1068–1093 (LLKCTDNIFTFIFLLEMILKWVAFGF). Topologically, residues 1094-1099 (RKYFTS) are cytoplasmic. The chain crosses the membrane as a helical span at residues 1100–1117 (AWCWLDFLIVVVSGLSLT). N1118 is a topological domain (extracellular). A helical; Voltage-sensor membrane pass occupies residues 1119-1140 (LPNLKSFRNLRALRPLRALSQF). Topologically, residues 1141–1159 (EGMKVVVNALMSAIPAILN) are cytoplasmic. A helical membrane pass occupies residues 1160–1181 (VLLVCLIFWLIFCILGVNFFSG). At 1182–1224 (KFGRCINGTDINKYFNASNVPNQSQCLVSNYTWKVPNVNFDNV) the chain is on the extracellular side. 4 N-linked (GlcNAc...) asparagine glycosylation sites follow: N1188, N1197, N1203, and N1211. Positions 1225–1246 (GNAYLALLQVATYKGWLDIMNA) form an intramembrane region, pore-forming. Over 1247–1262 (AVDSRGKDEQPAFEAN) the chain is Extracellular. Residues 1263–1289 (LYAYLYFVVFIIFGSFFTLNLFIGVII) form a helical membrane-spanning segment. The Cytoplasmic segment spans residues 1290 to 1342 (DNFNQQQKKLGGQDIFMTEEQKKYYNAMKKLGTKKPQKPIPRPLNKCQAFVFD). The IV repeat unit spans residues 1329–1619 (IPRPLNKCQA…WEKFDPEATQ (291 aa)). A helical membrane pass occupies residues 1343–1366 (LVTSQVFDVIILGLIVTNMIIMMA). Over 1367 to 1377 (ESEGQPNEVKK) the chain is Extracellular. A helical membrane pass occupies residues 1378–1401 (IFDILNIVFVVIFTVECLIKVFAL). The Cytoplasmic segment spans residues 1402-1407 (RQHYFT). A helical transmembrane segment spans residues 1408–1431 (NGWNLFDCVVVVLSIISTLVSGLE). Residues 1432-1440 (NSNVFPPTL) lie on the Extracellular side of the membrane. The chain crosses the membrane as a helical; Voltage-sensor span at residues 1441–1463 (FRIVRLARIGRILRLVRAARGIR). Over 1464–1478 (TLLFALMMSLPSLFN) the chain is Cytoplasmic. Residues 1479-1501 (IGLLLFLVMFIYAIFGMNWFSKV) form a helical membrane-spanning segment. At 1502–1515 (KRGSGIDDIFNFDT) the chain is on the extracellular side. The pore-forming intramembrane region spans 1516 to 1538 (FSGSMLCLFQITTSAGWDALLNP). Residues 1539–1559 (MLESKASCNSSSQESCQQPQI) are Extracellular-facing. Residues 1560-1584 (AIVYFVSYIIISFLIVVNMYIAVIL) traverse the membrane as a helical segment. Topologically, residues 1585–1765 (ENFNTATEES…DVPKIKVHCD (181 aa)) are cytoplasmic.

This sequence belongs to the sodium channel (TC 1.A.1.10) family. Nav1.9/SCN11A subfamily. The voltage-resistant sodium channel consists of an ion conducting pore forming alpha-subunit regulated by one or more auxiliary subunits SCN1B, SCN2B and SCN3B. Expressed in the dorsal root ganglia (C-fiber neurons), spinal cord, trigeminal ganglia, testis, ovary, uterus and small intestine.

It localises to the cell membrane. The enzyme catalyses Na(+)(in) = Na(+)(out). Sodium channel mediating the voltage-dependent sodium ion permeability of excitable membranes. Assuming opened or closed conformations in response to the voltage difference across the membrane, the protein forms a sodium-selective channel through which sodium ions may pass in accordance with their electrochemical gradient. Involved in membrane depolarization during action potential in nociceptors which function as key relay stations for the electrical transmission of pain signals from the periphery to the central nervous system. Also involved in rapid BDNF-evoked neuronal depolarization. In Mus musculus (Mouse), this protein is Sodium channel protein type 11 subunit alpha.